The sequence spans 856 residues: MPQPVGRKSTALPSPVVPPQANASALRRVLRRARDGVTLNVDEAAIAMTARGDELADLCASAARVRDAGLVSAGRHGPSGRLAISYSRKVFIPVTRLCRDNCHYCTFVTVPGKLRAQGSSTYMEPDEILDVARRGAEFGCKEALFTLGDRPEARWRQAREWLGERGYDSTLSYVRAMAIRVLEQTGLLPHLNPGVMSWSEMSRLKPVAPSMGMMLETTSRRLFETKGLAHYGSPDKDPAVRLRVLTDAGRLSIPFTTGLLVGIGETLSERADTLHAIRKSHKEFGHIQEVIVQNFRAKEHTAMAAFPDAGIEDYLATVAVARLVLGPGMRIQAPPNLVSGDECRALVGAGVDDWGGVSPLTPDHVNPERPWPALDELAAVTAEAGYDMVQRLTAQPKYVQAGAAWIDPRVRGHVVALADPATGLARDVNPVGMPWQEPDDVASWGRVDLGAAIDTQGRNTAVRSDLASAFGDWESIREQVHELAVRAPERIDTDVLAALRSAERAPAGCTDGEYLALATADGPALEAVAALADSLRRDVVGDEVTFVVNRNINFTNICYTGCRFCAFAQRKGDADAYSLSVGEVADRAWEAHVAGATEVCMQGGIDPELPVTGYADLVRAVKARVPSMHVHAFSPMEIANGVTKSGLSIREWLIGLREAGLDTIPGTAAEILDDEVRWVLTKGKLPTSLWIEIVTTAHEVGLRSSSTMMYGHVDSPRHWVAHLNVLRDIQDRTGGFTEFVPLPFVHQNSPLYLAGAARPGPSHRDNRAVHALARIMLHGRISHIQTSWVKLGVRRTQVMLEGGANDLGGTLMEETISRMAGSEHGSAKTVAELVAIAEGIGRPARQRTTTYALLAA.

2 consecutive Radical SAM core domains span residues Ile-84–Asn-336 and Val-544–Gln-785. Residues Ser-85–Leu-417 form a cofG-like region. Residues Cys-98, Cys-102, Cys-105, Cys-558, Cys-562, and Cys-565 each coordinate [4Fe-4S] cluster. The tract at residues Asp-521–Leu-854 is cofH-like.

In the N-terminal section; belongs to the radical SAM superfamily. CofG family. This sequence in the C-terminal section; belongs to the radical SAM superfamily. CofH family. It depends on [4Fe-4S] cluster as a cofactor.

The catalysed reaction is 5-amino-6-(D-ribitylamino)uracil + L-tyrosine + S-adenosyl-L-methionine = 5-amino-5-(4-hydroxybenzyl)-6-(D-ribitylimino)-5,6-dihydrouracil + 2-iminoacetate + 5'-deoxyadenosine + L-methionine + H(+). It catalyses the reaction 5-amino-5-(4-hydroxybenzyl)-6-(D-ribitylimino)-5,6-dihydrouracil + S-adenosyl-L-methionine = 7,8-didemethyl-8-hydroxy-5-deazariboflavin + 5'-deoxyadenosine + L-methionine + NH4(+) + H(+). The protein operates within cofactor biosynthesis; coenzyme F0 biosynthesis. Functionally, catalyzes the radical-mediated synthesis of 7,8-didemethyl-8-hydroxy-5-deazariboflavin (FO) from 5-amino-6-(D-ribitylamino)uracil and L-tyrosine. In Mycobacterium bovis (strain ATCC BAA-935 / AF2122/97), this protein is FO synthase (fbiC).